Here is a 678-residue protein sequence, read N- to C-terminus: Glycine--tRNA ligase beta subunit (678 aa).

The protein belongs to the class-II aminoacyl-tRNA synthetase family. As to quaternary structure, tetramer of two alpha and two beta subunits.

Its subcellular location is the cytoplasm. The catalysed reaction is tRNA(Gly) + glycine + ATP = glycyl-tRNA(Gly) + AMP + diphosphate. This Streptococcus pneumoniae (strain P1031) protein is Glycine--tRNA ligase beta subunit.